Here is a 412-residue protein sequence, read N- to C-terminus: CCA-adding enzyme (412 aa).

ATP contacts are provided by Gly-8 and Arg-11. CTP contacts are provided by Gly-8 and Arg-11. Residues Asp-21 and Asp-23 each coordinate Mg(2+). Residues Arg-91, Arg-137, and Arg-140 each coordinate ATP. CTP is bound by residues Arg-91, Arg-137, and Arg-140.

The protein belongs to the tRNA nucleotidyltransferase/poly(A) polymerase family. Bacterial CCA-adding enzyme type 2 subfamily. Mg(2+) is required as a cofactor.

It carries out the reaction a tRNA precursor + 2 CTP + ATP = a tRNA with a 3' CCA end + 3 diphosphate. It catalyses the reaction a tRNA with a 3' CCA end + 2 CTP + ATP = a tRNA with a 3' CCACCA end + 3 diphosphate. In terms of biological role, catalyzes the addition and repair of the essential 3'-terminal CCA sequence in tRNAs without using a nucleic acid template. Adds these three nucleotides in the order of C, C, and A to the tRNA nucleotide-73, using CTP and ATP as substrates and producing inorganic pyrophosphate. tRNA 3'-terminal CCA addition is required both for tRNA processing and repair. Also involved in tRNA surveillance by mediating tandem CCA addition to generate a CCACCA at the 3' terminus of unstable tRNAs. While stable tRNAs receive only 3'-terminal CCA, unstable tRNAs are marked with CCACCA and rapidly degraded. This is CCA-adding enzyme from Buchnera aphidicola subsp. Schizaphis graminum (strain Sg).